We begin with the raw amino-acid sequence, 238 residues long: tRNA1(Val) (adenine(37)-N6)-methyltransferase (238 aa).

Belongs to the methyltransferase superfamily. tRNA (adenine-N(6)-)-methyltransferase family.

The protein resides in the cytoplasm. It carries out the reaction adenosine(37) in tRNA1(Val) + S-adenosyl-L-methionine = N(6)-methyladenosine(37) in tRNA1(Val) + S-adenosyl-L-homocysteine + H(+). Functionally, specifically methylates the adenine in position 37 of tRNA(1)(Val) (anticodon cmo5UAC). This Cytophaga hutchinsonii (strain ATCC 33406 / DSM 1761 / CIP 103989 / NBRC 15051 / NCIMB 9469 / D465) protein is tRNA1(Val) (adenine(37)-N6)-methyltransferase.